We begin with the raw amino-acid sequence, 150 residues long: Deoxyuridine 5'-triphosphate nucleotidohydrolase (150 aa).

Residues 69 to 71 (RSG), N82, 86 to 88 (LID), and M96 contribute to the substrate site.

It belongs to the dUTPase family. The cofactor is Mg(2+).

It carries out the reaction dUTP + H2O = dUMP + diphosphate + H(+). Its pathway is pyrimidine metabolism; dUMP biosynthesis; dUMP from dCTP (dUTP route): step 2/2. Its function is as follows. This enzyme is involved in nucleotide metabolism: it produces dUMP, the immediate precursor of thymidine nucleotides and it decreases the intracellular concentration of dUTP so that uracil cannot be incorporated into DNA. The protein is Deoxyuridine 5'-triphosphate nucleotidohydrolase of Alcanivorax borkumensis (strain ATCC 700651 / DSM 11573 / NCIMB 13689 / SK2).